The following is a 137-amino-acid chain: Large ribosomal subunit protein uL16 (137 aa).

It belongs to the universal ribosomal protein uL16 family. Part of the 50S ribosomal subunit.

Functionally, binds 23S rRNA and is also seen to make contacts with the A and possibly P site tRNAs. The protein is Large ribosomal subunit protein uL16 of Pseudomonas putida (strain ATCC 47054 / DSM 6125 / CFBP 8728 / NCIMB 11950 / KT2440).